We begin with the raw amino-acid sequence, 199 residues long: Acireductone dioxygenase 2 (199 aa).

Histidine 98, histidine 100, glutamate 104, and histidine 143 together coordinate Fe(2+). Ni(2+) contacts are provided by histidine 98, histidine 100, glutamate 104, and histidine 143.

The protein belongs to the acireductone dioxygenase (ARD) family. Requires Fe(2+) as cofactor. Ni(2+) serves as cofactor.

It localises to the cytoplasm. It is found in the nucleus. The catalysed reaction is 1,2-dihydroxy-5-(methylsulfanyl)pent-1-en-3-one + O2 = 4-methylsulfanyl-2-oxobutanoate + formate + 2 H(+). It carries out the reaction 1,2-dihydroxy-5-(methylsulfanyl)pent-1-en-3-one + O2 = 3-(methylsulfanyl)propanoate + CO + formate + 2 H(+). It participates in amino-acid biosynthesis; L-methionine biosynthesis via salvage pathway; L-methionine from S-methyl-5-thio-alpha-D-ribose 1-phosphate: step 5/6. Functionally, catalyzes 2 different reactions between oxygen and the acireductone 1,2-dihydroxy-3-keto-5-methylthiopentene (DHK-MTPene) depending upon the metal bound in the active site. Fe-containing acireductone dioxygenase (Fe-ARD) produces formate and 2-keto-4-methylthiobutyrate (KMTB), the alpha-ketoacid precursor of methionine in the methionine recycle pathway. Ni-containing acireductone dioxygenase (Ni-ARD) produces methylthiopropionate, carbon monoxide and formate, and does not lie on the methionine recycle pathway. The polypeptide is Acireductone dioxygenase 2 (Vitis vinifera (Grape)).